The primary structure comprises 365 residues: Flagellar P-ring protein (365 aa).

A signal peptide spans 1–21 (MIKRIISIVFLLLTLPQLALA).

This sequence belongs to the FlgI family. In terms of assembly, the basal body constitutes a major portion of the flagellar organelle and consists of four rings (L,P,S, and M) mounted on a central rod.

It localises to the periplasm. The protein resides in the bacterial flagellum basal body. Its function is as follows. Assembles around the rod to form the L-ring and probably protects the motor/basal body from shearing forces during rotation. The polypeptide is Flagellar P-ring protein (Geobacter metallireducens (strain ATCC 53774 / DSM 7210 / GS-15)).